A 215-amino-acid chain; its full sequence is Imidazole glycerol phosphate synthase subunit HisH (215 aa).

In terms of domain architecture, Glutamine amidotransferase type-1 spans 7–215; the sequence is TIAVIDYGMG…LLKNFVEWQP (209 aa). Residue cysteine 86 is the Nucleophile of the active site. Catalysis depends on residues histidine 195 and glutamate 197.

As to quaternary structure, heterodimer of HisH and HisF.

Its subcellular location is the cytoplasm. The catalysed reaction is 5-[(5-phospho-1-deoxy-D-ribulos-1-ylimino)methylamino]-1-(5-phospho-beta-D-ribosyl)imidazole-4-carboxamide + L-glutamine = D-erythro-1-(imidazol-4-yl)glycerol 3-phosphate + 5-amino-1-(5-phospho-beta-D-ribosyl)imidazole-4-carboxamide + L-glutamate + H(+). The enzyme catalyses L-glutamine + H2O = L-glutamate + NH4(+). It functions in the pathway amino-acid biosynthesis; L-histidine biosynthesis; L-histidine from 5-phospho-alpha-D-ribose 1-diphosphate: step 5/9. Functionally, IGPS catalyzes the conversion of PRFAR and glutamine to IGP, AICAR and glutamate. The HisH subunit catalyzes the hydrolysis of glutamine to glutamate and ammonia as part of the synthesis of IGP and AICAR. The resulting ammonia molecule is channeled to the active site of HisF. This is Imidazole glycerol phosphate synthase subunit HisH from Dechloromonas aromatica (strain RCB).